The sequence spans 493 residues: Glutamate--tRNA ligase (493 aa).

The short motif at 10–20 (PSPTGDPHVGT) is the 'HIGH' region element. A 'KMSKS' region motif is present at residues 251 to 255 (KLSKR). Residue lysine 254 participates in ATP binding.

Belongs to the class-I aminoacyl-tRNA synthetase family. Glutamate--tRNA ligase type 1 subfamily. Monomer.

The protein resides in the cytoplasm. The enzyme catalyses tRNA(Glu) + L-glutamate + ATP = L-glutamyl-tRNA(Glu) + AMP + diphosphate. Catalyzes the attachment of glutamate to tRNA(Glu) in a two-step reaction: glutamate is first activated by ATP to form Glu-AMP and then transferred to the acceptor end of tRNA(Glu). In Pseudomonas putida (strain ATCC 47054 / DSM 6125 / CFBP 8728 / NCIMB 11950 / KT2440), this protein is Glutamate--tRNA ligase.